The following is a 248-amino-acid chain: Coenzyme F420:L-glutamate ligase (248 aa).

GTP-binding positions include 15-18 (IPLI), 45-46 (ET), and K50. D115 serves as a coordination point for a divalent metal cation. N118 provides a ligand contact to GTP. D155, S156, and Q213 together coordinate a divalent metal cation. 211-218 (MGQSNEGI) lines the GTP pocket.

Belongs to the CofE family. As to quaternary structure, homodimer. The cofactor is Mg(2+). It depends on Mn(2+) as a cofactor. K(+) is required as a cofactor.

The catalysed reaction is oxidized coenzyme F420-0 + GTP + L-glutamate = oxidized coenzyme F420-1 + GDP + phosphate + H(+). It catalyses the reaction oxidized coenzyme F420-1 + GTP + L-glutamate = oxidized coenzyme F420-2 + GDP + phosphate + H(+). It participates in cofactor biosynthesis; coenzyme F420 biosynthesis. Functionally, catalyzes the GTP-dependent successive addition of two or more gamma-linked L-glutamates to the L-lactyl phosphodiester of 7,8-didemethyl-8-hydroxy-5-deazariboflavin (F420-0) to form coenzyme F420-0-glutamyl-glutamate (F420-2) or polyglutamated F420 derivatives. The chain is Coenzyme F420:L-glutamate ligase from Methanococcus maripaludis (strain DSM 14266 / JCM 13030 / NBRC 101832 / S2 / LL).